We begin with the raw amino-acid sequence, 434 residues long: Histidine--tRNA ligase (434 aa).

Residues 412–434 form a disordered region; it reads DQTTVPVEAFPGDHDAPTYEDVV.

The protein belongs to the class-II aminoacyl-tRNA synthetase family.

The protein resides in the cytoplasm. The catalysed reaction is tRNA(His) + L-histidine + ATP = L-histidyl-tRNA(His) + AMP + diphosphate + H(+). This Haloquadratum walsbyi (strain DSM 16790 / HBSQ001) protein is Histidine--tRNA ligase.